Here is a 416-residue protein sequence, read N- to C-terminus: 4-hydroxy-3-methylbut-2-en-1-yl diphosphate synthase (flavodoxin) (416 aa).

The [4Fe-4S] cluster site is built by Cys304, Cys307, Cys350, and Glu357.

The protein belongs to the IspG family. [4Fe-4S] cluster is required as a cofactor.

It catalyses the reaction (2E)-4-hydroxy-3-methylbut-2-enyl diphosphate + oxidized [flavodoxin] + H2O + 2 H(+) = 2-C-methyl-D-erythritol 2,4-cyclic diphosphate + reduced [flavodoxin]. It functions in the pathway isoprenoid biosynthesis; isopentenyl diphosphate biosynthesis via DXP pathway; isopentenyl diphosphate from 1-deoxy-D-xylulose 5-phosphate: step 5/6. Converts 2C-methyl-D-erythritol 2,4-cyclodiphosphate (ME-2,4cPP) into 1-hydroxy-2-methyl-2-(E)-butenyl 4-diphosphate. This chain is 4-hydroxy-3-methylbut-2-en-1-yl diphosphate synthase (flavodoxin), found in Rhizobium etli (strain ATCC 51251 / DSM 11541 / JCM 21823 / NBRC 15573 / CFN 42).